Reading from the N-terminus, the 432-residue chain is PC-esterase domain-containing protein 1B (432 aa).

Disordered regions lie at residues 273–312 (WESS…SPGL) and 407–432 (GPYM…SRPQ). Residues 285-294 (QDNIGPQFAQ) show a composition bias toward polar residues. The segment covering 296–312 (PPYPFPRPPPLLPSPGL) has biased composition (pro residues).

It belongs to the PC-esterase family.

The sequence is that of PC-esterase domain-containing protein 1B (Pced1b) from Rattus norvegicus (Rat).